The chain runs to 344 residues: Anthranilate phosphoribosyltransferase (344 aa).

5-phospho-alpha-D-ribose 1-diphosphate contacts are provided by residues G85, 88 to 89, T93, 95 to 98, 113 to 121, and S125; these read GD, NIST, and KHGGRSVSS. G85 contacts anthranilate. S97 provides a ligand contact to Mg(2+). Residue R171 participates in anthranilate binding. Mg(2+) contacts are provided by D230 and E231.

The protein belongs to the anthranilate phosphoribosyltransferase family. As to quaternary structure, homodimer. Mg(2+) is required as a cofactor.

The enzyme catalyses N-(5-phospho-beta-D-ribosyl)anthranilate + diphosphate = 5-phospho-alpha-D-ribose 1-diphosphate + anthranilate. It functions in the pathway amino-acid biosynthesis; L-tryptophan biosynthesis; L-tryptophan from chorismate: step 2/5. Catalyzes the transfer of the phosphoribosyl group of 5-phosphorylribose-1-pyrophosphate (PRPP) to anthranilate to yield N-(5'-phosphoribosyl)-anthranilate (PRA). The polypeptide is Anthranilate phosphoribosyltransferase (Acidovorax ebreus (strain TPSY) (Diaphorobacter sp. (strain TPSY))).